Reading from the N-terminus, the 96-residue chain is Co-chaperonin GroES (96 aa).

This sequence belongs to the GroES chaperonin family. Heptamer of 7 subunits arranged in a ring. Interacts with the chaperonin GroEL.

The protein resides in the cytoplasm. Together with the chaperonin GroEL, plays an essential role in assisting protein folding. The GroEL-GroES system forms a nano-cage that allows encapsulation of the non-native substrate proteins and provides a physical environment optimized to promote and accelerate protein folding. GroES binds to the apical surface of the GroEL ring, thereby capping the opening of the GroEL channel. This is Co-chaperonin GroES from Hahella chejuensis (strain KCTC 2396).